An 83-amino-acid chain; its full sequence is Small ribosomal subunit protein uS17c (83 aa).

It belongs to the universal ribosomal protein uS17 family. Part of the 30S ribosomal subunit.

It is found in the plastid. Its subcellular location is the chloroplast. In terms of biological role, one of the primary rRNA binding proteins, it binds specifically to the 5'-end of 16S ribosomal RNA. The polypeptide is Small ribosomal subunit protein uS17c (rps17) (Pyropia yezoensis (Susabi-nori)).